The chain runs to 906 residues: Gamma-tubulin complex component 3 homolog (906 aa).

Residues 208–229 (GQQPSQQSTTTKGLPNTVSRNV) are compositionally biased toward polar residues. The tract at residues 208–242 (GQQPSQQSTTTKGLPNTVSRNVPRTRREGDSSGSV) is disordered.

Belongs to the TUBGCP family. As to quaternary structure, interacts with gamma-tubulin.

The protein resides in the cytoplasm. It is found in the cytoskeleton. Its subcellular location is the microtubule organizing center. The protein localises to the centrosome. Its function is as follows. Necessary for the recruitment of gamma-tubulin to the centrosome and for the formation of a functional centrosome. The chain is Gamma-tubulin complex component 3 homolog (tubgcp3) from Xenopus laevis (African clawed frog).